The following is a 309-amino-acid chain: Porphobilinogen deaminase (309 aa).

At Cys-241 the chain carries S-(dipyrrolylmethanemethyl)cysteine.

It belongs to the HMBS family. In terms of assembly, monomer. Dipyrromethane serves as cofactor.

The enzyme catalyses 4 porphobilinogen + H2O = hydroxymethylbilane + 4 NH4(+). The protein operates within porphyrin-containing compound metabolism; protoporphyrin-IX biosynthesis; coproporphyrinogen-III from 5-aminolevulinate: step 2/4. In terms of biological role, tetrapolymerization of the monopyrrole PBG into the hydroxymethylbilane pre-uroporphyrinogen in several discrete steps. In Bacillus cereus (strain AH187), this protein is Porphobilinogen deaminase.